The chain runs to 438 residues: Minor capsid protein p49 (438 aa).

The tract at residues 145–167 is disordered; that stretch reads NCLTQPSSLPSLKNPKNSSVPST.

The protein belongs to the asfivirus p49 structural protein family.

The protein resides in the virion. Functionally, together with the penton and the other minor capsid proteins (M1249L, p17), forms a complicated network immediately below the outer capsid shell, stabilizing the whole capsid. Plays an essential role in the formation of infectious virus particles. Especially required for the formation of the capsid vertices. During virion assembly, associates with the membrane and probably mediates the docking of the penton complex to the inner membrane, where it recruits the capsomers to form the penton core. This is Minor capsid protein p49 from Ornithodoros (relapsing fever ticks).